The following is a 423-amino-acid chain: Serine--tRNA ligase (423 aa).

231–233 (TAE) contacts L-serine. 262–264 (RSE) is a binding site for ATP. Residue Glu-285 participates in L-serine binding. Position 349–352 (349–352 (EISS)) interacts with ATP. Residue Ser-384 coordinates L-serine.

It belongs to the class-II aminoacyl-tRNA synthetase family. Type-1 seryl-tRNA synthetase subfamily. As to quaternary structure, homodimer. The tRNA molecule binds across the dimer.

The protein resides in the cytoplasm. The catalysed reaction is tRNA(Ser) + L-serine + ATP = L-seryl-tRNA(Ser) + AMP + diphosphate + H(+). It carries out the reaction tRNA(Sec) + L-serine + ATP = L-seryl-tRNA(Sec) + AMP + diphosphate + H(+). It participates in aminoacyl-tRNA biosynthesis; selenocysteinyl-tRNA(Sec) biosynthesis; L-seryl-tRNA(Sec) from L-serine and tRNA(Sec): step 1/1. Its function is as follows. Catalyzes the attachment of serine to tRNA(Ser). Is also able to aminoacylate tRNA(Sec) with serine, to form the misacylated tRNA L-seryl-tRNA(Sec), which will be further converted into selenocysteinyl-tRNA(Sec). The chain is Serine--tRNA ligase from Lactococcus lactis subsp. cremoris (strain SK11).